The sequence spans 1009 residues: Serine/threonine-protein phosphatase BSL2 homolog (1009 aa).

Residues 1-48 (MDVDSRMTTESDSDSDAAAQGGGGGGFGSETSSASPSAPGTPTAMGAG) form a disordered region. Residues 29–45 (SETSSASPSAPGTPTAM) are compositionally biased toward low complexity. 5 Kelch repeats span residues 136–182 (SSAG…VATA), 240–288 (FLLT…TASA), 293–344 (LLLL…FVNA), 349–396 (SGGA…DAAG), and 417–463 (MIYV…IQAG). A disordered region spans residues 549–572 (QVNGEAEHSPDREQSPDATPSVKQ). A compositionally biased stretch (basic and acidic residues) spans 553–563 (EAEHSPDREQS). Residues Asp711, His713, Asp745, and Asn777 each contribute to the Mn(2+) site. The active-site Proton donor is His778. The Mn(2+) site is built by His830 and His909. Residues 984–1009 (NANRPPTPTRGRPQAANNDRGSLAWI) are disordered.

The protein belongs to the PPP phosphatase family. BSU subfamily. The cofactor is Mn(2+).

Its subcellular location is the nucleus. The catalysed reaction is O-phospho-L-seryl-[protein] + H2O = L-seryl-[protein] + phosphate. It catalyses the reaction O-phospho-L-threonyl-[protein] + H2O = L-threonyl-[protein] + phosphate. The sequence is that of Serine/threonine-protein phosphatase BSL2 homolog (BSL2) from Oryza sativa subsp. japonica (Rice).